The primary structure comprises 1476 residues: MQKSPLEKASFISKLFFSWTTPILRKGYRHHLELSDIYQAPSADSADHLSEKLEREWDREQASKKNPQLIHALRRCFFWRFLFYGILLYLGEVTKAVQPVLLGRIIASYDPENKVERSIAIYLGIGLCLLFIVRTLLLHPAIFGLHRIGMQMRTAMFSLIYKKTLKLSSRVLDKISIGQLVSLLSNNLNKFDEGLALAHFIWIAPLQVTLLMGLLWDLLQFSAFCGLGLLIILVIFQAILGKMMVKYRDQRAAKINERLVITSEIIDNIYSVKAYCWESAMEKMIENLREVELKMTRKAAYMRFFTSSAFFFSGFFVVFLSVLPYTVINGIVLRKIFTTISFCIVLRMSVTRQFPTAVQIWYDSFGMIRKIQDFLQKQEYKVLEYNLMTTGIIMENVTAFWEEGFGELLEKVQQSNGDRKHSSDENNVSFSHLCLVGNPVLKNINLNIEKGEMLAITGSTGSGKTSLLMLILGELEASEGIIKHSGRVSFCSQFSWIMPGTIKENIIFGVSYDEYRYKSVVKACQLQQDITKFAEQDNTVLGEGGVTLSGGQRARISLARAVYKDADLYLLDSPFGYLDVFTEEQVFESCVCKLMANKTRILVTSKMEHLRKADKILILHQGSSYFYGTFSELQSLRPDFSSKLMGYDTFDQFTEERRSSILTETLRRFSVDDSSAPWSKPKQSFRQTGEVGEKRKNSILNSFSSVRKISIVQKTPLCIDGESDDLQEKRLSLVPDSEQGEAALPRSNMIATGPTFPGRRRQSVLDLMTFTPNSGSSNLQRTRTSIRKISLVPQISLNEVDVYSRRLSQDSTLNITEEINEEDLKECFLDDVIKIPPVTTWNTYLRYFTLHKGLLLVLIWCVLVFLVEVAASLFVLWLLKNNPVNSGNNGTKISNSSYVVIITSTSFYYIFYIYVGVADTLLALSLFRGLPLVHTLITASKILHRKMLHSILHAPMSTISKLKAGGILNRFSKDIAILDDFLPLTIFDFIQLVFIVIGAIIVVSALQPYIFLATVPGLVVFILLRAYFLHTAQQLKQLESEGRSPIFTHLVTSLKGLWTLRAFRRQTYFETLFHKALNLHTANWFMYLATLRWFQMRIDMIFVLFFIVVTFISILTTGEGEGTAGIILTLAMNIMSTLQWAVNSSIDTDSLMRSVSRVFKFIDIQTEESMYTQIIKELPREGSSDVLVIKNEHVKKSDIWPSGGEMVVKDLTVKYMDDGNAVLENISFSISPGQRVGLLGRTGSGKSTLLSAFLRMLNIKGDIEIDGVSWNSVTLQEWRKAFGVITQKVFIFSGTFRQNLDPNGKWKDEEIWKVADEVGLKSVIEQFPGQLNFTLVDGGYVLSHGHKQLMCLARSVLSKAKIILLDEPSAHLDPITYQVIRRVLKQAFAGCTVILCEHRIEAMLDCQRFLVIEESNVWQYDSLQALLSEKSIFQQAISSSEKMRFFQGRHSSKHKPRTQITALKEETEEEVQETRL.

Residues 1–77 are Cytoplasmic-facing; that stretch reads MQKSPLEKAS…QLIHALRRCF (77 aa). Residues 78–98 traverse the membrane as a helical segment; the sequence is FWRFLFYGILLYLGEVTKAVQ. In terms of domain architecture, ABC transmembrane type-1 1 spans 81–365; sequence FLFYGILLYL…TAVQIWYDSF (285 aa). Residues 99 to 122 are Extracellular-facing; that stretch reads PVLLGRIIASYDPENKVERSIAIY. Residues 123–146 form a helical membrane-spanning segment; the sequence is LGIGLCLLFIVRTLLLHPAIFGLH. The Cytoplasmic portion of the chain corresponds to 147–195; it reads RIGMQMRTAMFSLIYKKTLKLSSRVLDKISIGQLVSLLSNNLNKFDEGL. Residues 196–216 traverse the membrane as a helical segment; that stretch reads ALAHFIWIAPLQVTLLMGLLW. Residues 217-222 are Extracellular-facing; sequence DLLQFS. The chain crosses the membrane as a helical span at residues 223-243; the sequence is AFCGLGLLIILVIFQAILGKM. The Cytoplasmic segment spans residues 244 to 298; that stretch reads MVKYRDQRAAKINERLVITSEIIDNIYSVKAYCWESAMEKMIENLREVELKMTRK. The helical transmembrane segment at 299–319 threads the bilayer; the sequence is AAYMRFFTSSAFFFSGFFVVF. The Extracellular segment spans residues 320–339; sequence LSVLPYTVINGIVLRKIFTT. The helical transmembrane segment at 340–358 threads the bilayer; that stretch reads ISFCIVLRMSVTRQFPTAV. Residues 359-853 are Cytoplasmic-facing; sequence QIWYDSFGMI…YLRYFTLHKG (495 aa). Residues tryptophan 401, 458–465, and glutamine 493 contribute to the ATP site; that span reads GSTGSGKT. In terms of domain architecture, ABC transporter 1 spans 423-646; sequence SDENNVSFSH…RPDFSSKLMG (224 aa). A lipid anchor (S-palmitoyl cysteine) is attached at cysteine 524. Residues serine 549 and serine 660 each carry the phosphoserine modification. The tract at residues 654 to 826 is disordered R region; the sequence is TEERRSSILT…EEINEEDLKE (173 aa). At serine 670 the chain carries Phosphoserine; by PKA. Phosphoserine occurs at positions 684, 698, and 710. Phosphothreonine is present on threonine 715. Serine 732, serine 763, serine 785, serine 790, and serine 808 each carry phosphoserine. The helical transmembrane segment at 854–874 threads the bilayer; that stretch reads LLLVLIWCVLVFLVEVAASLF. An ABC transmembrane type-1 2 domain is found at 854-1153; that stretch reads LLLVLIWCVL…SSIDTDSLMR (300 aa). At 875–913 the chain is on the extracellular side; that stretch reads VLWLLKNNPVNSGNNGTKISNSSYVVIITSTSFYYIFYI. Asparagine 889 and asparagine 895 each carry an N-linked (GlcNAc...) asparagine glycan. Residues 914 to 934 form a discontinuously helical membrane-spanning segment; sequence YVGVADTLLALSLFRGLPLVH. The Cytoplasmic segment spans residues 935-985; sequence TLITASKILHRKMLHSILHAPMSTISKLKAGGILNRFSKDIAILDDFLPLT. Residues 986–1006 traverse the membrane as a helical segment; the sequence is IFDFIQLVFIVIGAIIVVSAL. The Extracellular portion of the chain corresponds to 1007–1008; it reads QP. The helical transmembrane segment at 1009–1029 threads the bilayer; the sequence is YIFLATVPGLVVFILLRAYFL. Residues 1030–1090 lie on the Cytoplasmic side of the membrane; the sequence is HTAQQLKQLE…TANWFMYLAT (61 aa). Residues 1091–1111 form a helical membrane-spanning segment; the sequence is LRWFQMRIDMIFVLFFIVVTF. Topologically, residues 1112–1125 are extracellular; the sequence is ISILTTGEGEGTAG. Residues 1126 to 1146 form a helical membrane-spanning segment; the sequence is IILTLAMNIMSTLQWAVNSSI. The Cytoplasmic segment spans residues 1147-1476; it reads DTDSLMRSVS…TEEEVQETRL (330 aa). The ABC transporter 2 domain occupies 1208 to 1439; it reads VKDLTVKYMD…KSIFQQAISS (232 aa). Residues tyrosine 1215 and 1240–1247 contribute to the ATP site; that span reads GRTGSGKS. The interaction with GORASP2 stretch occupies residues 1382–1476; the sequence is RVLKQAFAGC…TEEEVQETRL (95 aa). A lipid anchor (S-palmitoyl cysteine) is attached at cysteine 1391. Phosphoserine is present on residues serine 1440 and serine 1452. The disordered stretch occupies residues 1446-1476; the sequence is FQGRHSSKHKPRTQITALKEETEEEVQETRL. The span at 1466 to 1476 shows a compositional bias: acidic residues; the sequence is ETEEEVQETRL. The PDZ-binding signature appears at 1474–1476; that stretch reads TRL.

Belongs to the ABC transporter superfamily. ABCC family. CFTR transporter (TC 3.A.1.202) subfamily. As to quaternary structure, monomer; does not require oligomerization for channel activity. May form oligomers in the membrane. Interacts with SLC26A3, SLC26A6 and NHERF1. Interacts with SHANK2. Interacts with MYO6. Interacts (via C-terminus) with GOPC (via PDZ domain); this promotes CFTR internalization and thereby decreases channel activity. Interacts with SLC4A7 through NHERF1. Found in a complex with MYO5B and RAB11A. Interacts with ANO1. Interacts with SLC26A8. Interacts with AHCYL1; the interaction increases CFTR activity. Interacts with CSE1L. The core-glycosylated form interacts with GORASP2 (via PDZ GRASP-type 1 domain) in respone to ER stress. Interacts with MARCHF2; the interaction leads to CFTR ubiqtuitination and degradation. Interacts with ADGRG2. N-glycosylated. In terms of processing, phosphorylated; cAMP treatment promotes phosphorylation and activates the channel. Dephosphorylation decreases the ATPase activity (in vitro). Phosphorylation at PKA sites activates the channel. Phosphorylation at PKC sites enhances the response to phosphorylation by PKA. Phosphorylated by AMPK; this inhibits channel activity. Post-translationally, ubiquitinated, leading to its degradation in the lysosome. Deubiquitination by USP10 in early endosomes enhances its endocytic recycling to the cell membrane. Ubiquitinated by RNF185 during ER stress. Ubiquitinated by MARCHF2. Expressed in the epididymis (at protein level). In the initial segment of the epididymis, detected on both the luminal and basolateral sides of the ducts where it is expressed in the duct columnar cells as well as in the interstitial smooth muscle cells. Expressed in sperm in the caput. In the cauda, detected along the luminal border but not continuously and is also expressed on the basolateral surface. Within the caudal lumen, detected on sperm. Isoform 1: Expressed in a variety of epithelial tissues including colon, kidney, lung, small intestine, pancreatic duct and testis. Isoform 2: Expressed only in testis. Isoform 3: Expressed only in testis.

It is found in the apical cell membrane. The protein resides in the early endosome membrane. Its subcellular location is the cell membrane. It localises to the recycling endosome membrane. The protein localises to the endoplasmic reticulum membrane. It is found in the nucleus. The enzyme catalyses ATP + H2O + closed Cl(-) channel = ADP + phosphate + open Cl(-) channel.. It carries out the reaction chloride(in) = chloride(out). It catalyses the reaction hydrogencarbonate(in) = hydrogencarbonate(out). The catalysed reaction is ATP + H2O = ADP + phosphate + H(+). In terms of biological role, epithelial ion channel that plays an important role in the regulation of epithelial ion and water transport and fluid homeostasis. Mediates the transport of chloride ions across the cell membrane. Possesses an intrinsic ATPase activity and utilizes ATP to gate its channel; the passive flow of anions through the channel is gated by cycles of ATP binding and hydrolysis by the ATP-binding domains. The ion channel is also permeable to HCO(3)(-); selectivity depends on the extracellular chloride concentration. Exerts its function also by modulating the activity of other ion channels and transporters. Contributes to the regulation of the pH and the ion content of the epithelial fluid layer. Modulates the activity of the epithelial sodium channel (ENaC) complex, in part by regulating the cell surface expression of the ENaC complex. May regulate bicarbonate secretion and salvage in epithelial cells by regulating the transporter SLC4A7. Can inhibit the chloride channel activity of ANO1. Plays a role in the chloride and bicarbonate homeostasis during sperm epididymal maturation and capacitation. This chain is Cystic fibrosis transmembrane conductance regulator, found in Mus musculus (Mouse).